Here is a 234-residue protein sequence, read N- to C-terminus: Orotidine 5'-phosphate decarboxylase (234 aa).

Residues Asp-17, Lys-38, 65-74 (DLKLHDIPNT), Thr-122, Arg-184, Gln-193, Gly-213, and Arg-214 contribute to the substrate site. Lys-67 serves as the catalytic Proton donor.

This sequence belongs to the OMP decarboxylase family. Type 1 subfamily. Homodimer.

It catalyses the reaction orotidine 5'-phosphate + H(+) = UMP + CO2. Its pathway is pyrimidine metabolism; UMP biosynthesis via de novo pathway; UMP from orotate: step 2/2. In terms of biological role, catalyzes the decarboxylation of orotidine 5'-monophosphate (OMP) to uridine 5'-monophosphate (UMP). This Thermosynechococcus vestitus (strain NIES-2133 / IAM M-273 / BP-1) protein is Orotidine 5'-phosphate decarboxylase.